Reading from the N-terminus, the 1024-residue chain is MATLDLCNNEHLNETESADEEDDQLQTPIKTVVTLKFKENPDSTSPIQVFQLNIGSNIIGRGSPSFLNDIKISRRHAEIIVSAEVGNVTFNQLGQNHSTLYRKDQTPIKMVRGISNQLLDDDLISLYDGSIPFSIHIERDNQFMSVCEGNFILTQDAADTNYHINSPTKTITTTSTTTTTTETLIKNIDNNNNNNNNNNNNNNNNNNNNNNNNNNNNNNNNNNNNNNNNNNNNNNNNNNNNNNNSILSKRSRDNENNHNHQYIHHDKTPLTLQQQQQLQNQQQLHQQQQQQLQYEQLQQLQQLQQHQQQQQHQQQQQQQQQQQQQQQQQQQQQQFKKHKRENTPVIVEDSLKLNIQENELLFIKKIGSGACGEVCQYEWKGTPVAVKTIFKSLLRKDKKEEFEKEVSILKCLRHPNVVLFMGTCLLNGNLAIITEYLNRGSLRDVLTTMNKSELSLSVKVKMLIDVAQGMNYLHTYSPPIIHRDLKSLNLLVDNNFNVKVSDFGLSRFISGGIGSSAKTFCGTLSWIAPEVFNGSGYTTKVDVYSFGIVLWEILTHKQPSGNISATSLGHPELPSNCPQSFSDLIKECCNRNPDQRPNFSQILLKLKLMYNQINNNNNNNKIDSSSFHNNNNNCSYNNSNDNNGILVTGGVGGNVSGNVESNNNNNNNTLNGAGNVIILNEIKDFTIQPNEITNIKTIIVKDSYSILEGQYKGKLVSIKQINGSINDFEMKQLGVLASIKSPLAVRFIGVVFNTDEYAIISEHVGNNGSLLTLMQNHSNQLNWSNTIDLAIQITQSIQYLHKHQPPILHRNITSDCFLLSSLNNNSNQNNNNNNNNNNNNNNNNNNNNNNNKKNDGGDDNGENTNTTTTTTTTTTTATNITNELNINEIKIKVHDFGLSRFNTQENEESLKEIKGNFLYSPPELLSLNTYSNKSDIYSLSIVLYELFETCLTKTYKKPYHEVTLDFDFQIIHKTSKLNLRPTISNNMPNEISKILQQGWFSDSVLRPSLDTIIKELLICKKNLC.

The interval 187 to 261 (NIDNNNNNNN…RDNENNHNHQ (75 aa)) is disordered. A compositionally biased stretch (low complexity) spans 190-244 (NNNNNNNNNNNNNNNNNNNNNNNNNNNNNNNNNNNNNNNNNNNNNNNNNNNNNNN). Over residues 250-261 (RSRDNENNHNHQ) the composition is skewed to basic and acidic residues. Protein kinase domains follow at residues 360-609 (LLFI…LKLM) and 645-1018 (ILVT…ELLI). ATP-binding positions include 366–374 (IGSGACGEV) and Lys-387. The active-site Proton acceptor is Asp-484. ATP contacts are provided by residues 651 to 659 (VGGNVSGNV) and Lys-719. Composition is skewed to low complexity over residues 823–851 (NNNS…NNNN) and 862–874 (ENTN…TTTT). Residues 823 to 874 (NNNSNQNNNNNNNNNNNNNNNNNNNNNNNKKNDGGDDNGENTNTTTTTTTTT) are disordered.

The protein belongs to the protein kinase superfamily. TKL Ser/Thr protein kinase family.

The catalysed reaction is L-seryl-[protein] + ATP = O-phospho-L-seryl-[protein] + ADP + H(+). It catalyses the reaction L-threonyl-[protein] + ATP = O-phospho-L-threonyl-[protein] + ADP + H(+). The protein is Probable serine/threonine-protein kinase DDB_G0271682 of Dictyostelium discoideum (Social amoeba).